We begin with the raw amino-acid sequence, 131 residues long: Profilin-1 (131 aa).

This sequence belongs to the profilin family. Occurs in many kinds of cells as a complex with monomeric actin in a 1:1 ratio.

It localises to the cytoplasm. The protein localises to the cytoskeleton. Its function is as follows. Binds to actin and affects the structure of the cytoskeleton. At high concentrations, profilin prevents the polymerization of actin, whereas it enhances it at low concentrations. By binding to PIP2, it inhibits the formation of IP3 and DG. In Ricinus communis (Castor bean), this protein is Profilin-1 (PRO1).